The primary structure comprises 359 residues: C-X-C chemokine receptor type 4 (359 aa).

The tract at residues 1-23 is important for chemokine binding and signaling; that stretch reads MEPISVSIYTSDNYSEEVGSGDY. Residues 1–40 lie on the Extracellular side of the membrane; it reads MEPISVSIYTSDNYSEEVGSGDYDSNKEPCFRDENVHFNR. At tyrosine 9 the chain carries Sulfotyrosine. N-linked (GlcNAc...) asparagine glycosylation occurs at asparagine 13. Tyrosine 14 is subject to Sulfotyrosine. O-linked (Xyl...) (chondroitin sulfate) serine glycosylation occurs at serine 20. Tyrosine 23 is modified (sulfotyrosine). Cystine bridges form between cysteine 30-cysteine 281 and cysteine 111-cysteine 193. Residues 41 to 65 traverse the membrane as a helical segment; it reads IFLPTIYFIIFLTGIVGNGLVILVM. Residues 66–79 lie on the Cytoplasmic side of the membrane; the sequence is GYQKKLRSMTDKYR. Residues 80-101 traverse the membrane as a helical segment; the sequence is LHLSVADLLFVITLPFWAVDAM. The tract at residues 96-99 is chemokine binding; the sequence is WAVD. Residues 102-112 are Extracellular-facing; sequence ADWYFGKFLCK. The helical transmembrane segment at 113–132 threads the bilayer; the sequence is AVHIIYTVNLYSSVLILAFI. The tract at residues 115 to 119 is chemokine binding; the sequence is HIIYT. Topologically, residues 133-156 are cytoplasmic; the sequence is SLDRYLAIVHATNSQRPRKLLAEK. The Important for signaling signature appears at 135–137; the sequence is DRY. The segment at 137–149 is involved in dimerization; when bound to chemokine; that stretch reads YLAIVHATNSQRP. A helical membrane pass occupies residues 157–176; that stretch reads AVYVGVWIPALLLTIPDFIF. Residues 177 to 202 lie on the Extracellular side of the membrane; it reads ADVSQGDISQGDDRYICDRLYPDSLW. A chemokine binding, important for signaling region spans residues 193 to 197; the sequence is CDRLY. The segment at 198 to 217 is involved in dimerization; it reads PDSLWMVVFQFQHIMVGLIL. Residues 203–223 traverse the membrane as a helical segment; it reads MVVFQFQHIMVGLILPGIVIL. Residues 224-248 are Cytoplasmic-facing; the sequence is SCYCIIISKLSHSKGHQKRKALKTT. A helical transmembrane segment spans residues 249-268; it reads VILILAFFACWLPYYVGISI. Residues 269–289 are Extracellular-facing; sequence DSFILLGVIKQGCDFESIVHK. Residues 273-275 form an involved in dimerization region; the sequence is LLG. A helical transmembrane segment spans residues 290–309; that stretch reads WISITEALAFFHCCLNPILY. At 310–359 the chain is on the cytoplasmic side; that stretch reads AFLGAKFKSSAQHALNSMSRGSSLKILSKGKRGGHSSVSTESESSSFHSS. Phosphoserine occurs at positions 326 and 328. Phosphoserine; by PKC and GRK6 occurs at positions 331 and 332. Positions 335–359 are disordered; sequence ILSKGKRGGHSSVSTESESSSFHSS. Serine 337 carries the phosphoserine; by GRK6 modification. Lysine 338 is covalently cross-linked (Glycyl lysine isopeptide (Lys-Gly) (interchain with G-Cter in ubiquitin)). Residues 344 to 359 are compositionally biased toward low complexity; that stretch reads HSSVSTESESSSFHSS. Position 346 is a phosphoserine; by GRK6 (serine 346). 2 positions are modified to phosphoserine: serine 355 and serine 358.

The protein belongs to the G-protein coupled receptor 1 family. As to quaternary structure, monomer. Can form homodimers. Interacts with CD164. Interacts with ARRB2; the interaction is dependent on the C-terminal phosphorylation of CXCR4 and allows activation of MAPK1 and MAPK3. Interacts with ARR3; the interaction is dependent on the C-terminal phosphorylation of CXCR4 and modulates calcium mobilization. Interacts with RNF113A; the interaction, enhanced by CXCL12, promotes CXCR4 ubiquitination and subsequent degradation. Interacts (via the cytoplasmic C-terminal) with ITCH (via the WW domains I and II); the interaction, enhanced by CXCL12, promotes CXCR4 ubiquitination and leads to its degradation. Interacts with extracellular ubiquitin. Interacts with DBN1; this interaction is enhanced by antigenic stimulation. Following LPS binding, may form a complex with GDF5, HSP90AA1 and HSPA8. In terms of processing, phosphorylated on agonist stimulation. Rapidly phosphorylated on serine and threonine residues in the C-terminal. Phosphorylation at Ser-331 and Ser-332 leads to recruitment of ITCH, ubiquitination and protein degradation. Ubiquitinated after ligand binding, leading to its degradation. Ubiquitinated by ITCH at the cell membrane on agonist stimulation. The ubiquitin-dependent mechanism, endosomal sorting complex required for transport (ESCRT), then targets CXCR4 for lysosomal degradation. This process is dependent also on prior Ser-/Thr-phosphorylation in the C-terminal of CXCR4. Also binding of ARRB1 to STAM negatively regulates CXCR4 sorting to lysosomes though modulating ubiquitination of SFR5S. Post-translationally, sulfation is required for efficient binding of CXCL12/SDF-1alpha and promotes its dimerization. In terms of processing, O- and N-glycosylated. N-glycosylation can mask coreceptor function. The O-glycosylation chondroitin sulfate attachment does not affect interaction with CXCL12/SDF-1alpha nor its coreceptor activity. In terms of tissue distribution, lymphocytes, macrophages, neutrophils, microglial cells and astrocytes. Found in spleen, thymus, bone marrow, lymph nodes and, at lower levels in brain, small intestine, stomach and kidney. CXCR4-A is predominant in all tissues tested. During embryonic development, high levels are detected in the endothelium of developing blood vessels and in many regions of the developing brain including the olfactory epithelium, olfactory bulb, hippocampus, cerebellum and spinal cord.

It is found in the cell membrane. The protein localises to the cell junction. Its subcellular location is the early endosome. The protein resides in the late endosome. It localises to the lysosome. Its function is as follows. Receptor for the C-X-C chemokine CXCL12/SDF-1 that transduces a signal by increasing intracellular calcium ion levels and enhancing MAPK1/MAPK3 activation. Involved in the AKT signaling cascade. Plays a role in regulation of cell migration, e.g. during wound healing. Acts as a receptor for extracellular ubiquitin; leading to enhanced intracellular calcium ions and reduced cellular cAMP levels. Binds bacterial lipopolysaccharide (LPS) et mediates LPS-induced inflammatory response, including TNF secretion by monocytes. Involved in hematopoiesis and in cardiac ventricular septum formation. Also plays an essential role in vascularization of the gastrointestinal tract, probably by regulating vascular branching and/or remodeling processes in endothelial cells. Involved in cerebellar development. In the CNS, could mediate hippocampal-neuron survival. This chain is C-X-C chemokine receptor type 4 (Cxcr4), found in Mus musculus (Mouse).